The sequence spans 1064 residues: Lysine-specific demethylase 4A (1064 aa).

Ala-2 bears the N-acetylalanine mark. A JmjN domain is found at 14–56 (IMTFYPTMEEFRNFSRYIAYIESQGAHRAGLAKVVPPKEWKPR). Tyr-132 is a 2-oxoglutarate binding site. A JmjC domain is found at 142–308 (EKHVDEWNIG…YGKQAVLCSC (167 aa)). His-188 and Glu-190 together coordinate Fe cation. 2-oxoglutarate is bound by residues Asn-198 and Lys-206. Residues Cys-234 and His-240 each contribute to the Zn(2+) site. Lys-241 is a binding site for 2-oxoglutarate. His-276 is a Fe cation binding site. Positions 306 and 308 each coordinate Zn(2+). 3 disordered regions span residues 358 to 384 (ELPPRAGNEEECPEDDMEGVEDGEEGD), 501 to 537 (FSGSKKKSSSSLGSGSSRDSVSSDSETSEPLSCRAQG), and 616 to 642 (SDDETSEQLTPEEEAEETEAWAKPLSQ). The segment covering 366–382 (EEECPEDDMEGVEDGEE) has biased composition (acidic residues). A compositionally biased stretch (low complexity) spans 509–532 (SSSLGSGSSRDSVSSDSETSEPLS). Ser-523 is modified (phosphoserine). An interaction with NCOR1 region spans residues 597 to 638 (RQPLSKLPRHHPLVLQECVSDDETSEQLTPEEEAEETEAWAK). Residues 616 to 634 (SDDETSEQLTPEEEAEETE) show a composition bias toward acidic residues. Residues 709–767 (MCFTSTGCGTDINLSTPYLEEDGTSILVSCKKCSVRVHASCYGVPPAKASEDWMCSRCS) form a PHD-type 1 zinc finger. A C2HC pre-PHD-type zinc finger spans residues 772–805 (EEDCCLCSLRGGALQRANDDRWVHVSCAVAILEA). The segment at 828–885 (LKCIFCKKRRKRTAGCCVQCSHGRCPTAFHVSCAQAAGVMMQPDDWPFVVFITCFRHK) adopts a PHD-type 2 zinc-finger fold. Tudor domains follow at residues 897–954 (QSIT…CLQF) and 955–1011 (GPPA…EELP).

Belongs to the JHDM3 histone demethylase family. In terms of assembly, interacts with histone deacetylase proteins HDAC1, HDAC2 and HDAC3. Interacts with RB and NCOR1. Interacts with VRK1. Fe(2+) is required as a cofactor. Post-translationally, ubiquitinated by RNF8 and RNF168, leading to its degradation. Degradation promotes accessibility of H4K20me2 mark for DNA repair protein TP53BP1, which is then recruited. Also ubiquitinated by the SCF(FBXO22) complex; leading to proteasomal degradation.

It is found in the nucleus. It carries out the reaction N(6),N(6),N(6)-trimethyl-L-lysyl(9)-[histone H3] + 2 2-oxoglutarate + 2 O2 = N(6)-methyl-L-lysyl(9)-[histone H3] + 2 formaldehyde + 2 succinate + 2 CO2. It catalyses the reaction N(6),N(6),N(6)-trimethyl-L-lysyl(36)-[histone H3] + 2 2-oxoglutarate + 2 O2 = N(6)-methyl-L-lysyl(36)-[histone H3] + 2 formaldehyde + 2 succinate + 2 CO2. In terms of biological role, histone demethylase that specifically demethylates 'Lys-9' and 'Lys-36' residues of histone H3, thereby playing a central role in histone code. Does not demethylate histone H3 'Lys-4', H3 'Lys-27' nor H4 'Lys-20'. Demethylates trimethylated H3 'Lys-9' and H3 'Lys-36' residue, while it has no activity on mono- and dimethylated residues. Demethylation of Lys residue generates formaldehyde and succinate. Participates in transcriptional repression of ASCL2 and E2F-responsive promoters via the recruitment of histone deacetylases and NCOR1, respectively. The chain is Lysine-specific demethylase 4A (KDM4A) from Pongo abelii (Sumatran orangutan).